We begin with the raw amino-acid sequence, 370 residues long: Phospho-N-acetylmuramoyl-pentapeptide-transferase (370 aa).

Transmembrane regions (helical) follow at residues 24 to 44 (YLTF…VAMG), 78 to 98 (TMGG…WADL), 103 to 123 (VWVV…DDYA), 138 to 158 (KLVA…LFAP), 177 to 197 (ALVI…IAGF), 209 to 229 (GLAI…AYLV), 245 to 265 (GVGE…GFLW), 273 to 293 (IFMG…IAVC), 298 to 318 (LVLG…MIQV), and 347 to 367 (TVVI…LATL).

The protein belongs to the glycosyltransferase 4 family. MraY subfamily. It depends on Mg(2+) as a cofactor.

It localises to the cell inner membrane. It catalyses the reaction UDP-N-acetyl-alpha-D-muramoyl-L-alanyl-gamma-D-glutamyl-meso-2,6-diaminopimeloyl-D-alanyl-D-alanine + di-trans,octa-cis-undecaprenyl phosphate = di-trans,octa-cis-undecaprenyl diphospho-N-acetyl-alpha-D-muramoyl-L-alanyl-D-glutamyl-meso-2,6-diaminopimeloyl-D-alanyl-D-alanine + UMP. It participates in cell wall biogenesis; peptidoglycan biosynthesis. Catalyzes the initial step of the lipid cycle reactions in the biosynthesis of the cell wall peptidoglycan: transfers peptidoglycan precursor phospho-MurNAc-pentapeptide from UDP-MurNAc-pentapeptide onto the lipid carrier undecaprenyl phosphate, yielding undecaprenyl-pyrophosphoryl-MurNAc-pentapeptide, known as lipid I. The chain is Phospho-N-acetylmuramoyl-pentapeptide-transferase from Caulobacter vibrioides (strain NA1000 / CB15N) (Caulobacter crescentus).